Here is a 660-residue protein sequence, read N- to C-terminus: Leucine-rich repeat transmembrane protein FLRT2 (660 aa).

Residues 1–35 (MGLQTTKWPSHGAFFLKSWLIISLGLYSQVSKLLA) form the signal peptide. Cystine bridges form between C36/C42 and C40/C49. The 28-residue stretch at 36–63 (CPSVCRCDRNFVYCNERSLTSVPLGIPE) folds into the LRRNT domain. The Extracellular segment spans residues 36 to 541 (CPSVCRCDRN…TTSHSMGSPF (506 aa)). 10 LRR repeats span residues 64–85 (GVTVLYLHNNQINNAGFPAELH), 89–109 (SVHTVYLYGNQLDEFPMNLPK), 110–131 (NVRVLHLQENNIQTISRAALAQ), 134–155 (KLEELHLDDNSISTVGVEDGAF), 160–181 (SLKLLFLSKNHLSSVPVGLPVD), 182–202 (LQELRVDENRIAVISDMAFQN), 205–225 (SLERLIVDGNLLTNKGIAEGT), 231–252 (KLKEFSIVRNSLSHPPPDLPGT), 253–274 (HLIRLYLQDNQINHIPLTAFSN), and 277–298 (KLERLDISNNQLRMLTQGVFDN). Residue N202 is glycosylated (N-linked (GlcNAc...) asparagine). N-linked (GlcNAc...) asparagine glycosylation occurs at N298. One can recognise an LRRCT domain in the interval 310–362 (NPWFCDCSIKWVTEWLKYIPSSLNVRGFMCQGPEQVRGMAVRELNMNLLSCPT). Cystine bridges form between C314/C339 and C316/C360. A compositionally biased stretch (low complexity) spans 373–409 (APSTASPTTQPPTLSIPNPSRSYTPPTPTTSKLPTIP). The segment at 373 to 413 (APSTASPTTQPPTLSIPNPSRSYTPPTPTTSKLPTIPDWDG) is disordered. The Fibronectin type-III domain maps to 419–517 (PPISERIQLS…ICSEATTHAS (99 aa)). N-linked (GlcNAc...) asparagine glycans are attached at residues N433 and N521. The chain crosses the membrane as a helical span at residues 542-562 (LLAGLIGGAVIFVLVVLLSVF). At 563–660 (CWHMHKKGRY…SVPDLEHCHT (98 aa)) the chain is on the cytoplasmic side.

In terms of assembly, self-associates (via leucine-rich repeats), giving rise to homooligomers. Interacts with FGFR1. Interacts with FGFR2. Interacts (via extracellular domain) with ADGRL1/LPHN1. Interacts (via extracellular domain) with ADGRL3 (via olfactomedin-like domain). Interacts (via extracellular domain) with UNC5D (via the first Ig-like domain). Can also interact (via extracellular domain) with UNC5B, but with much lower affinity. Interacts (via extracellular domain) with FN1. Post-translationally, N-glycosylated. Proteolytic cleavage in the juxtamembrane region gives rise to a soluble ectodomain. Cleavage is probably effected by a metalloprotease. As to expression, expressed in pancreas, skeletal muscle, brain, and heart.

It localises to the cell membrane. Its subcellular location is the endoplasmic reticulum membrane. The protein resides in the cell junction. The protein localises to the focal adhesion. It is found in the secreted. It localises to the extracellular space. Its subcellular location is the extracellular matrix. The protein resides in the microsome membrane. The protein localises to the synapse. It is found in the synaptosome. In terms of biological role, functions in cell-cell adhesion, cell migration and axon guidance. Mediates cell-cell adhesion via its interactions with ADGRL3 and probably also other latrophilins that are expressed at the surface of adjacent cells. May play a role in the migration of cortical neurons during brain development via its interaction with UNC5D. Mediates axon growth cone collapse and plays a repulsive role in neuron guidance via its interaction with UNC5D, and possibly also other UNC-5 family members. Plays a role in fibroblast growth factor-mediated signaling cascades. Required for normal organization of the cardiac basement membrane during embryogenesis, and for normal embryonic epicardium and heart morphogenesis. This is Leucine-rich repeat transmembrane protein FLRT2 (FLRT2) from Homo sapiens (Human).